Reading from the N-terminus, the 471-residue chain is Adenosylhomocysteinase (471 aa).

Substrate contacts are provided by Thr60, Asp135, and Glu196. 197–199 is an NAD(+) binding site; that stretch reads TTT. Residues Lys226 and Asp230 each contribute to the substrate site. NAD(+) contacts are provided by residues Asn231, 260–265, Glu283, Asn318, 339–341, and Asn387; these read GYGDVG and IGH.

This sequence belongs to the adenosylhomocysteinase family. Requires NAD(+) as cofactor.

The protein resides in the cytoplasm. It catalyses the reaction S-adenosyl-L-homocysteine + H2O = L-homocysteine + adenosine. The protein operates within amino-acid biosynthesis; L-homocysteine biosynthesis; L-homocysteine from S-adenosyl-L-homocysteine: step 1/1. May play a key role in the regulation of the intracellular concentration of adenosylhomocysteine. This Chlorobium luteolum (strain DSM 273 / BCRC 81028 / 2530) (Pelodictyon luteolum) protein is Adenosylhomocysteinase.